A 274-amino-acid polypeptide reads, in one-letter code: WIMGHMVNAIERVDEFLNLGANAIEFDIDFDKDGIAQITHHGIPCNCGRKCTKKAIFTEYLDNIRQVTTPDDPKFREQLVLLALDLKLLRISSAKAYRAGEDVAKKLLDHYWQRGNSRARAYILLNIPLVEDYEFIRAFKDTLKNEGYESYNDKVGINFTGNEDLDKIRDVLEILGIHKQVWQADGITSCFARGTERLKEALEKRDTPGYNYINKIYAWTLVRKSIMRRSLRLGVDGVMSNNPDRVIKVLKEKEFADKFRLATYNDNPWEKFRG.

The active site involves His-5. Residues Glu-25 and Asp-27 each coordinate Mg(2+). Residue His-41 is the Nucleophile of the active site. 2 cysteine pairs are disulfide-bonded: Cys-45–Cys-51 and Cys-47–Cys-190. Mg(2+) is bound at residue Asp-85.

It belongs to the arthropod phospholipase D family. Class II subfamily. Mg(2+) serves as cofactor. As to expression, expressed by the venom gland.

Its subcellular location is the secreted. It catalyses the reaction an N-(acyl)-sphingosylphosphocholine = an N-(acyl)-sphingosyl-1,3-cyclic phosphate + choline. It carries out the reaction an N-(acyl)-sphingosylphosphoethanolamine = an N-(acyl)-sphingosyl-1,3-cyclic phosphate + ethanolamine. The catalysed reaction is a 1-acyl-sn-glycero-3-phosphocholine = a 1-acyl-sn-glycero-2,3-cyclic phosphate + choline. The enzyme catalyses a 1-acyl-sn-glycero-3-phosphoethanolamine = a 1-acyl-sn-glycero-2,3-cyclic phosphate + ethanolamine. Dermonecrotic toxins cleave the phosphodiester linkage between the phosphate and headgroup of certain phospholipids (sphingolipid and lysolipid substrates), forming an alcohol (often choline) and a cyclic phosphate. This toxin acts on sphingomyelin (SM). It may also act on ceramide phosphoethanolamine (CPE), lysophosphatidylcholine (LPC) and lysophosphatidylethanolamine (LPE), but not on lysophosphatidylserine (LPS), and lysophosphatidylglycerol (LPG). It acts by transphosphatidylation, releasing exclusively cyclic phosphate products as second products. Induces dermonecrosis, hemolysis, increased vascular permeability, edema, inflammatory response, and platelet aggregation. The sequence is that of Dermonecrotic toxin SdSicTox-betaIIB1bx from Sicarius cf. damarensis (strain GJB-2008) (Six-eyed sand spider).